Consider the following 354-residue polypeptide: Uroporphyrinogen decarboxylase (354 aa).

Substrate-binding positions include 27-31 (RQAGR), Asp77, Tyr154, Thr209, and His327.

The protein belongs to the uroporphyrinogen decarboxylase family. Homodimer.

It is found in the cytoplasm. The catalysed reaction is uroporphyrinogen III + 4 H(+) = coproporphyrinogen III + 4 CO2. It participates in porphyrin-containing compound metabolism; protoporphyrin-IX biosynthesis; coproporphyrinogen-III from 5-aminolevulinate: step 4/4. Functionally, catalyzes the decarboxylation of four acetate groups of uroporphyrinogen-III to yield coproporphyrinogen-III. The polypeptide is Uroporphyrinogen decarboxylase (Pseudomonas putida (strain GB-1)).